A 255-amino-acid chain; its full sequence is Ribosomal RNA small subunit methyltransferase A (255 aa).

Positions 11, 13, 38, 59, 83, and 101 each coordinate S-adenosyl-L-methionine.

It belongs to the class I-like SAM-binding methyltransferase superfamily. rRNA adenine N(6)-methyltransferase family. RsmA subfamily.

Its subcellular location is the cytoplasm. It catalyses the reaction adenosine(1518)/adenosine(1519) in 16S rRNA + 4 S-adenosyl-L-methionine = N(6)-dimethyladenosine(1518)/N(6)-dimethyladenosine(1519) in 16S rRNA + 4 S-adenosyl-L-homocysteine + 4 H(+). Its function is as follows. Specifically dimethylates two adjacent adenosines (A1518 and A1519) in the loop of a conserved hairpin near the 3'-end of 16S rRNA in the 30S particle. May play a critical role in biogenesis of 30S subunits. This Thiobacillus denitrificans (strain ATCC 25259 / T1) protein is Ribosomal RNA small subunit methyltransferase A.